Reading from the N-terminus, the 807-residue chain is MSEIEEKFNESSYGADSIKVLKGLEAVRKRPGMYIGDVGDGSGLHHMIYEVVDNAIDESLAGYCDLVRVTLNKNGSVTVSDNGRGIPVEIHGEEGISAAEVIMTQLHAGGKFDQNAYKVAGGLHGVGVSVVNALSEWLELRIWRNNKEYLMRFNNGITEAPLAVVKENIDKKGTEVTFFPSVETFTNIEFDFGTIEHRLRELAFLNSGVKILLVDNRFEEVKEVEFYYTGGIEAYVKYIDRAKHAIHPCIVVNTENAESGISLELAMHWNDSYHENILCFTNNIRQRDGGTHLSAFKSAITRVITSYLDTTGLNKKAKNYFSGEDTREGLCCVLSVKVPDPKFSSQTKDKLVSSEVRPVVENAVYTKVLEWFEEHPAEAKAIIAKIMEAANAREAARKARELTRRKSALEVSNLPGKLADCHAKDPAISELFIVEGDSAGGTAKQGRDSKIQAILPLRGKILNVERARFDKMLGSDQIGTLITALGISVEREFSLEKLRYHKVIIMTDADVDGSHIRTLLLTFFYRHMPELINKGYLYIAQPPLYKVKKGAAEFYLKNEQALQDYLIKSTINDATLILDDKERLVGDNLEELINKVVKFNGLLDHASKKFNRSITEILAINDLLNNKIFEPESDLRLKKALDVLNSLEDSPDKTNWEVLKHENKIEFFRFSRGLKESKILLKEQLESFEFVQISKFALTIFDIFSKQLKLIVKSQEFDILTPSQLLNTIIECGKRGINIQRFKGLGEMNSDQLWETTLDPTKRTLLQVRVAEIDEAEGIFSTLMGDVVEPRRLFIQANALNVVNLDV.

Residues 429–543 enclose the Toprim domain; that stretch reads SELFIVEGDS…KGYLYIAQPP (115 aa). Mg(2+) is bound by residues glutamate 435, aspartate 508, and aspartate 510.

This sequence belongs to the type II topoisomerase GyrB family. As to quaternary structure, heterotetramer, composed of two GyrA and two GyrB chains. In the heterotetramer, GyrA contains the active site tyrosine that forms a transient covalent intermediate with DNA, while GyrB binds cofactors and catalyzes ATP hydrolysis. Mg(2+) serves as cofactor. It depends on Mn(2+) as a cofactor. The cofactor is Ca(2+).

The protein localises to the cytoplasm. The catalysed reaction is ATP-dependent breakage, passage and rejoining of double-stranded DNA.. Functionally, a type II topoisomerase that negatively supercoils closed circular double-stranded (ds) DNA in an ATP-dependent manner to modulate DNA topology and maintain chromosomes in an underwound state. Negative supercoiling favors strand separation, and DNA replication, transcription, recombination and repair, all of which involve strand separation. Also able to catalyze the interconversion of other topological isomers of dsDNA rings, including catenanes and knotted rings. Type II topoisomerases break and join 2 DNA strands simultaneously in an ATP-dependent manner. The sequence is that of DNA gyrase subunit B from Rickettsia conorii (strain ATCC VR-613 / Malish 7).